A 660-amino-acid chain; its full sequence is Methionine--tRNA ligase 1 (660 aa).

The short motif at 15-25 (YYPSGKLHIGH) is the 'HIGH' region element. Residues 310–314 (KMSKS) carry the 'KMSKS' region motif. Lys-313 contacts ATP. The tRNA-binding domain maps to 560-660 (DFFKVELRVA…QNIPNGTKIK (101 aa)).

This sequence belongs to the class-I aminoacyl-tRNA synthetase family. MetG type 2B subfamily. As to quaternary structure, homodimer.

The protein resides in the cytoplasm. The catalysed reaction is tRNA(Met) + L-methionine + ATP = L-methionyl-tRNA(Met) + AMP + diphosphate. Its function is as follows. Is required not only for elongation of protein synthesis but also for the initiation of all mRNA translation through initiator tRNA(fMet) aminoacylation. The protein is Methionine--tRNA ligase 1 of Bacillus anthracis.